Reading from the N-terminus, the 161-residue chain is Phosphopantetheine adenylyltransferase (161 aa).

A substrate-binding site is contributed by S9. ATP is bound by residues 9-10 (SF) and H17. Residues K41, L73, and R87 each coordinate substrate. ATP-binding positions include 88–90 (GIR), E98, and 123–129 (TGFISST).

The protein belongs to the bacterial CoaD family. As to quaternary structure, homohexamer. Mg(2+) serves as cofactor.

Its subcellular location is the cytoplasm. The enzyme catalyses (R)-4'-phosphopantetheine + ATP + H(+) = 3'-dephospho-CoA + diphosphate. It participates in cofactor biosynthesis; coenzyme A biosynthesis; CoA from (R)-pantothenate: step 4/5. Reversibly transfers an adenylyl group from ATP to 4'-phosphopantetheine, yielding dephospho-CoA (dPCoA) and pyrophosphate. The chain is Phosphopantetheine adenylyltransferase from Psychromonas ingrahamii (strain DSM 17664 / CCUG 51855 / 37).